The following is a 229-amino-acid chain: Uracil-DNA glycosylase (229 aa).

The active-site Proton acceptor is the aspartate 65.

The protein belongs to the uracil-DNA glycosylase (UDG) superfamily. UNG family.

It localises to the cytoplasm. The enzyme catalyses Hydrolyzes single-stranded DNA or mismatched double-stranded DNA and polynucleotides, releasing free uracil.. Functionally, excises uracil residues from the DNA which can arise as a result of misincorporation of dUMP residues by DNA polymerase or due to deamination of cytosine. The protein is Uracil-DNA glycosylase of Limosilactobacillus reuteri (strain DSM 20016) (Lactobacillus reuteri).